Reading from the N-terminus, the 410-residue chain is Histone-lysine N-methyltransferase SUV39H2 (410 aa).

In terms of domain architecture, Chromo spans 47-105 (YEVEYLCDYKVVKDMEYYLVKWKGWPDSTNTWEPLQNLKCPLLLQQFFNDKHNYLSQVK). Residues 189–247 (FGCSCTDCFFEKCCPAEAGVLLAYNKNQQIKIPPGTPIYECNSRCQCGPDCPNRIVQKG) form the Pre-SET domain. Residues Cys191, Cys193, Cys196, Cys201, Cys202, Cys229, Cys233, Cys235, and Cys239 each contribute to the Zn(2+) site. One can recognise an SET domain in the interval 250-373 (YSLCIFRTSN…AGEELTFDYQ (124 aa)). Residues 261–263 (CGW), Tyr304, and 330–331 (NH) each bind S-adenosyl-L-methionine. Cys333 is a Zn(2+) binding site. Phosphoserine is present on residues Ser381, Ser384, and Ser388. In terms of domain architecture, Post-SET spans 394 to 410 (ARTVCKCGAVTCRGYLN). Positions 398, 400, and 405 each coordinate Zn(2+).

It belongs to the class V-like SAM-binding methyltransferase superfamily. Histone-lysine methyltransferase family. Suvar3-9 subfamily. Interacts with SMAD5. The large PER complex involved in the histone methylation is composed of at least PER2, CBX3, TRIM28, SUV39H1 and/or SUV39H2; CBX3 mediates the formation of the complex. In terms of processing, ubiquitinated by the DCX(DCAF13) E3 ubiquitin ligase complex, leading to its degradation.

The protein resides in the nucleus. It localises to the chromosome. The protein localises to the centromere. The catalysed reaction is L-lysyl(9)-[histone H3] + 3 S-adenosyl-L-methionine = N(6),N(6),N(6)-trimethyl-L-lysyl(9)-[histone H3] + 3 S-adenosyl-L-homocysteine + 3 H(+). Functionally, histone methyltransferase that specifically trimethylates 'Lys-9' of histone H3 using monomethylated H3 'Lys-9' as substrate. H3 'Lys-9' trimethylation represents a specific tag for epigenetic transcriptional repression by recruiting HP1 (CBX1, CBX3 and/or CBX5) proteins to methylated histones. Mainly functions in heterochromatin regions, thereby playing a central role in the establishment of constitutive heterochromatin at pericentric and telomere regions. H3 'Lys-9' trimethylation is also required to direct DNA methylation at pericentric repeats. SUV39H1 is targeted to histone H3 via its interaction with RB1 and is involved in many processes, such as cell cycle regulation, transcriptional repression and regulation of telomere length. May participate in regulation of higher-order chromatin organization during spermatogenesis. Recruited by the large PER complex to the E-box elements of the circadian target genes such as PER2 itself or PER1, contributes to the conversion of local chromatin to a heterochromatin-like repressive state through H3 'Lys-9' trimethylation. The polypeptide is Histone-lysine N-methyltransferase SUV39H2 (SUV39H2) (Bos taurus (Bovine)).